The following is a 391-amino-acid chain: Heme A synthase (391 aa).

Transmembrane regions (helical) follow at residues 37–57 (IRLWLMALFLLVMAMIVVGGL), 121–141 (RQLGRVIGLVWAVGFLGFLAA), 152–172 (LLALGALGGLQGGIGWWMVAS), 186–206 (LATHLGLAFIILGLIAWQALL), 229–249 (TTVLIGVAFLQIVLGALVAGI), 298–318 (FLHRMAGYTLAALGLIFWIFG), 332–352 (LLAMALLAQILLGVGTVLSAA), and 354–374 (WQVAIAHQVGAVVIWVLILHA). Histidine 300 contributes to the heme binding site. Residue histidine 360 coordinates heme.

This sequence belongs to the COX15/CtaA family. Type 2 subfamily. As to quaternary structure, interacts with CtaB. Requires heme b as cofactor.

The protein resides in the cell membrane. It carries out the reaction Fe(II)-heme o + 2 A + H2O = Fe(II)-heme a + 2 AH2. Its pathway is porphyrin-containing compound metabolism; heme A biosynthesis; heme A from heme O: step 1/1. Catalyzes the conversion of heme O to heme A by two successive hydroxylations of the methyl group at C8. The first hydroxylation forms heme I, the second hydroxylation results in an unstable dihydroxymethyl group, which spontaneously dehydrates, resulting in the formyl group of heme A. The protein is Heme A synthase of Cereibacter sphaeroides (strain ATCC 17029 / ATH 2.4.9) (Rhodobacter sphaeroides).